Consider the following 185-residue polypeptide: Ribosome-recycling factor (185 aa).

Belongs to the RRF family.

The protein resides in the cytoplasm. Its function is as follows. Responsible for the release of ribosomes from messenger RNA at the termination of protein biosynthesis. May increase the efficiency of translation by recycling ribosomes from one round of translation to another. This chain is Ribosome-recycling factor, found in Salmonella paratyphi A (strain ATCC 9150 / SARB42).